The sequence spans 249 residues: Probable transcriptional regulatory protein aq_1575 (249 aa).

It belongs to the TACO1 family.

It localises to the cytoplasm. The chain is Probable transcriptional regulatory protein aq_1575 from Aquifex aeolicus (strain VF5).